The primary structure comprises 330 residues: Membrane progestin receptor gamma (330 aa).

At 1–51 (MLSLKLPRLFSIDQIPQVFHEQGILFGYRHPQSSATACILSLFQMTNETLN) the chain is on the cytoplasmic side. The helical transmembrane segment at 52-72 (IWTHLLPFWFFAWRFVTALYM) threads the bilayer. Over 73–80 (TDIKNDSY) the chain is Extracellular. The helical transmembrane segment at 81–101 (SWPMLVYMCTSCVYPLVSSCA) threads the bilayer. The Cytoplasmic portion of the chain corresponds to 102–113 (HTFSSMSKNARH). Residues 114 to 134 (ICYFLDYGAVNLFSLGSAIAY) traverse the membrane as a helical segment. Residues 135–141 (SAYTFPD) are Extracellular-facing. Residues 142–162 (ALMCTTFHDYYVALAVLNTIL) traverse the membrane as a helical segment. The Cytoplasmic portion of the chain corresponds to 163–186 (STGLSCYSRFLEIQKPRLCKVIRV). Residues 187–207 (LAFAYPYTWDSLPIFYRLFLF) form a helical membrane-spanning segment. The Extracellular segment spans residues 208 to 253 (PGESAQNEATSYHQKHMIMTLLASFLYSAHLPERLAPGRFDYIGHS). A helical transmembrane segment spans residues 254 to 274 (HQLFHVCVILATHMQMEAILL). The Cytoplasmic portion of the chain corresponds to 275-294 (DKTLRKEWLLATSKPFSFSQ). The helical transmembrane segment at 295-315 (IAGAILLCIIFSLSNIIYFSA) threads the bilayer. Topologically, residues 316–330 (ALYRIPKPELHKKET) are extracellular.

It belongs to the ADIPOR family. As to expression, expressed in the brain, lung, kidney, colon, adrenal and lung.

The protein localises to the cell membrane. In terms of biological role, plasma membrane progesterone (P4) receptor coupled to G proteins. Seems to act through a G(i) mediated pathway. May be involved in oocyte maturation. The chain is Membrane progestin receptor gamma from Homo sapiens (Human).